Reading from the N-terminus, the 429-residue chain is Enolase (429 aa).

Q163 lines the (2R)-2-phosphoglycerate pocket. The active-site Proton donor is the E205. 3 residues coordinate Mg(2+): D242, E287, and D314. Residues K339, R368, S369, and K390 each contribute to the (2R)-2-phosphoglycerate site. K339 functions as the Proton acceptor in the catalytic mechanism.

Belongs to the enolase family. Mg(2+) serves as cofactor.

The protein localises to the cytoplasm. It localises to the secreted. Its subcellular location is the cell surface. The enzyme catalyses (2R)-2-phosphoglycerate = phosphoenolpyruvate + H2O. The protein operates within carbohydrate degradation; glycolysis; pyruvate from D-glyceraldehyde 3-phosphate: step 4/5. Its function is as follows. Catalyzes the reversible conversion of 2-phosphoglycerate (2-PG) into phosphoenolpyruvate (PEP). It is essential for the degradation of carbohydrates via glycolysis. This is Enolase from Anaeromyxobacter sp. (strain Fw109-5).